Consider the following 346-residue polypeptide: Phosphate acyltransferase (346 aa).

The protein belongs to the PlsX family. In terms of assembly, homodimer. Probably interacts with PlsY.

It localises to the cytoplasm. The enzyme catalyses a fatty acyl-[ACP] + phosphate = an acyl phosphate + holo-[ACP]. The protein operates within lipid metabolism; phospholipid metabolism. Catalyzes the reversible formation of acyl-phosphate (acyl-PO(4)) from acyl-[acyl-carrier-protein] (acyl-ACP). This enzyme utilizes acyl-ACP as fatty acyl donor, but not acyl-CoA. The sequence is that of Phosphate acyltransferase from Crocosphaera subtropica (strain ATCC 51142 / BH68) (Cyanothece sp. (strain ATCC 51142)).